Consider the following 329-residue polypeptide: Malate dehydrogenase (329 aa).

13–19 is an NAD(+) binding site; the sequence is GAAGNIS. Residues Arg94 and Arg100 each coordinate substrate. Residues Asn107, Gln114, and 131–133 contribute to the NAD(+) site; that span reads VGN. Residues Asn133 and Arg164 each contribute to the substrate site. The Proton acceptor role is filled by His189.

This sequence belongs to the LDH/MDH superfamily. MDH type 2 family.

It catalyses the reaction (S)-malate + NAD(+) = oxaloacetate + NADH + H(+). Catalyzes the reversible oxidation of malate to oxaloacetate. The chain is Malate dehydrogenase from Psychrobacter cryohalolentis (strain ATCC BAA-1226 / DSM 17306 / VKM B-2378 / K5).